A 297-amino-acid polypeptide reads, in one-letter code: Calponin-1 (297 aa).

One can recognise a Calponin-homology (CH) domain in the interval 28–131 (HQREQELREW…STLLALASMA (104 aa)). 3 Calponin-like repeats span residues 164 to 189 (IGLQMGTNKFASQQGMTAYGTRRHLY), 204 to 229 (ISLQMGTNKGASQAGMTAPGTKRQIF), and 243 to 268 (VSLQMGSNKGASQRGMTVYGLPRQVY). Position 170 is a phosphothreonine; by ROCK2 (Thr-170). Ser-175 carries the post-translational modification Phosphoserine; by ROCK2. Residues Thr-180 and Thr-184 each carry the phosphothreonine; by ROCK2 modification. Thr-259 bears the Phosphothreonine; by ROCK2 mark.

The protein belongs to the calponin family.

Thin filament-associated protein that is implicated in the regulation and modulation of smooth muscle contraction. It is capable of binding to actin, calmodulin and tropomyosin. The interaction of calponin with actin inhibits the actomyosin Mg-ATPase activity. This is Calponin-1 (CNN1) from Bos taurus (Bovine).